A 92-amino-acid chain; its full sequence is Small ribosomal subunit protein bS20 (92 aa).

This sequence belongs to the bacterial ribosomal protein bS20 family.

Functionally, binds directly to 16S ribosomal RNA. This chain is Small ribosomal subunit protein bS20, found in Rickettsia conorii (strain ATCC VR-613 / Malish 7).